The primary structure comprises 180 residues: Large ribosomal subunit protein uL5 (180 aa).

The protein belongs to the universal ribosomal protein uL5 family. As to quaternary structure, part of the 50S ribosomal subunit; part of the 5S rRNA/L5/L18/L25 subcomplex. Contacts the 5S rRNA and the P site tRNA. Forms a bridge to the 30S subunit in the 70S ribosome.

Its function is as follows. This is one of the proteins that bind and probably mediate the attachment of the 5S RNA into the large ribosomal subunit, where it forms part of the central protuberance. In the 70S ribosome it contacts protein S13 of the 30S subunit (bridge B1b), connecting the 2 subunits; this bridge is implicated in subunit movement. Contacts the P site tRNA; the 5S rRNA and some of its associated proteins might help stabilize positioning of ribosome-bound tRNAs. The sequence is that of Large ribosomal subunit protein uL5 from Lacticaseibacillus casei (strain BL23) (Lactobacillus casei).